A 654-amino-acid polypeptide reads, in one-letter code: Potassium voltage-gated channel subfamily A member 4 (654 aa).

Over 1–305 (MEVAMVSAES…LLFEYPESSS (305 aa)) the chain is Cytoplasmic. A compositionally biased stretch (low complexity) spans 39-52 (AAAAAVAAATAAVE). Residues 39–146 (AAAAAVAAAT…EGRFYYSEDD (108 aa)) form a disordered region. The span at 81–99 (GSRRRRRQRPEKKKAHHRQ) shows a compositional bias: basic residues. S122 is subject to Phosphoserine. Positions 122-137 (SEEEEEEEDEEEEEEE) are enriched in acidic residues. Residues 306 to 327 (PARGIAIVSVLVILISIVIFCL) form a helical membrane-spanning segment. The Extracellular portion of the chain corresponds to 328–371 (ETLPEFRDDRDLIMALSAGGHSGLLNDTSAPHLENSGHTIFNDP). The N-linked (GlcNAc...) asparagine glycan is linked to N353. Residues 372-393 (FFIVETVCIVWFSFEFVVRCFA) traverse the membrane as a helical segment. The Cytoplasmic segment spans residues 394 to 404 (CPSQALFFKNI). Residues 405 to 425 (MNIIDIVSILPYFITLGTDLA) traverse the membrane as a helical segment. The Extracellular portion of the chain corresponds to 426–440 (QQQGGGNGQQQQAMS). Residues 441-461 (FAILRIIRLVRVFRIFKLSRH) traverse the membrane as a helical; Voltage-sensor segment. The Cytoplasmic portion of the chain corresponds to 462–476 (SKGLQILGHTLRASM). Positions 463–476 (KGLQILGHTLRASM) are S4-S5 linker. Residues 477–498 (RELGLLIFFLFIGVILFSSAVY) form a helical membrane-spanning segment. The Extracellular segment spans residues 499 to 512 (FAEADEPTTHFQSI). An intramembrane region (helical) is located at residues 513–524 (PDAFWWAVVTMT). A Selectivity filter motif is present at residues 525–530 (TVGYGD). An intramembrane segment occupies 525–532 (TVGYGDMK). Over 533-539 (PITVGGK) the chain is Extracellular. A helical membrane pass occupies residues 540-568 (IVGSLCAIAGVLTIALPVPVIVSNFNYFY). At 569-654 (HRETENEEQT…SNAKAVETDV (86 aa)) the chain is on the cytoplasmic side. S600 carries the post-translational modification Phosphoserine; by PKA. The span at 630–641 (CQGKGDDSETDK) shows a compositional bias: basic and acidic residues. The disordered stretch occupies residues 630 to 654 (CQGKGDDSETDKNNCSNAKAVETDV). Residues 652-654 (TDV) carry the PDZ-binding motif.

It belongs to the potassium channel family. A (Shaker) (TC 1.A.1.2) subfamily. Kv1.4/KCNA4 sub-subfamily. In terms of assembly, homotetramer and heterotetramer of potassium channel proteins. Interacts with KCNAB1 and KCNAB2. Interacts with DLG1, DLG2 and DLG4 via their PDZ domains. Interacts with SIGMAR1. Detected in a complex with KCNA1. Interacts with KCNA2. Part of a complex containing KCNA1, KCNAB1 and LGI1. Interacts (via cytoplasmic N-terminal domain) with KCNRG. As to expression, detectable in brain, atrium, left and right ventricle, and kidney, but not in skeletal muscle, endothelial cells, aorta, and liver.

It is found in the cell membrane. Its subcellular location is the cell projection. It localises to the axon. It carries out the reaction K(+)(in) = K(+)(out). Functionally, voltage-gated potassium channel that mediates transmembrane potassium transport in excitable membranes. Forms tetrameric potassium-selective channels through which potassium ions pass in accordance with their electrochemical gradient. The channel alternates between opened and closed conformations in response to the voltage difference across the membrane. Can form functional homotetrameric channels and heterotetrameric channels that contain variable proportions of KCNA1, KCNA2, KCNA4, KCNA5, and possibly other family members as well; channel properties depend on the type of alpha subunits that are part of the channel. Channel properties are modulated by cytoplasmic beta subunits that regulate the subcellular location of the alpha subunits and promote rapid inactivation. In vivo, membranes probably contain a mixture of heteromeric potassium channel complexes, making it difficult to assign currents observed in intact tissues to any particular potassium channel family member. Homotetrameric KCNA4 forms a potassium channel that opens in response to membrane depolarization, followed by rapid spontaneous channel closure. Likewise, a heterotetrameric channel formed by KCNA1 and KCNA4 shows rapid inactivation. The protein is Potassium voltage-gated channel subfamily A member 4 (KCNA4) of Mustela putorius furo (European domestic ferret).